Reading from the N-terminus, the 395-residue chain is MANDYLFTSESVSEGHPDKVADQISDAILDAILAQDKYSRVAAETLCNTGLVVLAGEITTTANVDYIQVARETIKRIGYDNTDYGIDYRGCAVLVAYDKQSPDIAQGVDRAHDNNLDQGAGDQGLMFGYACDETPELMPLPIHLSHRLVERQANLRRDGRLPWLRPDAKSQVTIRYVDGKPHSIDTVVLSTQHSPDIDLGQLREAVIEEIIKPTLPAELIKGDIKFLVNPTGRFVIGGPQGDCGLTGRKIIVDTYGGAAPHGGGAFSGKDPSKVDRSAAYAGRYVAKNIVAAGLASRALIQVSYAIGVAQPTSVMVNTFGTGRVSDATITRLVQEHFDLRPKGIIQMLDLLRPVYEKTAAYGHFGREEPEFSWEATDKALALAEAAGTEPVAALA.

Histidine 16 serves as a coordination point for ATP. Aspartate 18 contacts Mg(2+). Glutamate 44 is a binding site for K(+). 2 residues coordinate L-methionine: glutamate 57 and glutamine 100. The interval 100-110 (QSPDIAQGVDR) is flexible loop. Residues 167–169 (DAK), 233–234 (RF), aspartate 242, 248–249 (RK), alanine 265, and lysine 269 each bind ATP. Residue aspartate 242 coordinates L-methionine. Lysine 273 lines the L-methionine pocket.

The protein belongs to the AdoMet synthase family. Homotetramer; dimer of dimers. It depends on Mg(2+) as a cofactor. K(+) is required as a cofactor.

The protein localises to the cytoplasm. The catalysed reaction is L-methionine + ATP + H2O = S-adenosyl-L-methionine + phosphate + diphosphate. The protein operates within amino-acid biosynthesis; S-adenosyl-L-methionine biosynthesis; S-adenosyl-L-methionine from L-methionine: step 1/1. Catalyzes the formation of S-adenosylmethionine (AdoMet) from methionine and ATP. The overall synthetic reaction is composed of two sequential steps, AdoMet formation and the subsequent tripolyphosphate hydrolysis which occurs prior to release of AdoMet from the enzyme. This chain is S-adenosylmethionine synthase, found in Paraburkholderia phymatum (strain DSM 17167 / CIP 108236 / LMG 21445 / STM815) (Burkholderia phymatum).